We begin with the raw amino-acid sequence, 465 residues long: Lactaldehyde dehydrogenase (465 aa).

Residue 220 to 225 (GSVEVG) coordinates NAD(+). Catalysis depends on residues Glu-240 and Cys-274.

It belongs to the aldehyde dehydrogenase family. As to quaternary structure, homotetramer.

The enzyme catalyses (S)-lactaldehyde + NAD(+) + H2O = (S)-lactate + NADH + 2 H(+). The protein operates within cofactor biosynthesis; coenzyme F420 biosynthesis. Involved in F420 biosynthesis through the oxidation of lactaldehyde to lactate. This Methanococcus aeolicus (strain ATCC BAA-1280 / DSM 17508 / OCM 812 / Nankai-3) protein is Lactaldehyde dehydrogenase.